Consider the following 289-residue polypeptide: ATP synthase mitochondrial F1 complex assembly factor 2 (289 aa).

The transit peptide at 1 to 40 directs the protein to the mitochondrion; the sequence is MWRSCLRLRDGGRRLLNRPAGGPSASMSPGPTIPSPARAY. Positions 13 to 40 are disordered; it reads RRLLNRPAGGPSASMSPGPTIPSPARAY. Lys-133 bears the N6-succinyllysine mark.

This sequence belongs to the ATP12 family. As to quaternary structure, interacts with ATP5F1B; involved in the assembly of the F1 component of the mitochondrial ATP synthase (ATPase). Interacts with FMC1. Widely expressed.

It is found in the mitochondrion inner membrane. Its function is as follows. Plays a role in the assembly of the F1 component of the mitochondrial ATP synthase (ATPase). This is ATP synthase mitochondrial F1 complex assembly factor 2 from Homo sapiens (Human).